Reading from the N-terminus, the 119-residue chain is Ribosome-binding factor A (119 aa).

The protein belongs to the RbfA family. Monomer. Binds 30S ribosomal subunits, but not 50S ribosomal subunits or 70S ribosomes.

The protein localises to the cytoplasm. In terms of biological role, one of several proteins that assist in the late maturation steps of the functional core of the 30S ribosomal subunit. Associates with free 30S ribosomal subunits (but not with 30S subunits that are part of 70S ribosomes or polysomes). Required for efficient processing of 16S rRNA. May interact with the 5'-terminal helix region of 16S rRNA. This chain is Ribosome-binding factor A, found in Chlorobium luteolum (strain DSM 273 / BCRC 81028 / 2530) (Pelodictyon luteolum).